A 288-amino-acid polypeptide reads, in one-letter code: Cytochrome b-c1 complex catalytic subunit, mitochondrial (288 aa).

A helical transmembrane segment spans residues 12 to 34 (SMVQKFIAGGVGVTGLTASYLLY). The Cytochrome c domain occupies 69–222 (ASIRRGFQVY…DLVEYEDGTP (154 aa)). Residues Cys82, Cys85, and His86 each coordinate heme c. Residues 111–121 (EELEYDDEPDD) show a composition bias toward acidic residues. Residues 111-138 (EELEYDDEPDDEGKPRKRPGKLADYIPG) form a disordered region. The helical transmembrane segment at 250 to 268 (WGLKALVVLSSLYLLSIWV) threads the bilayer.

This sequence belongs to the cytochrome c family. Component of the ubiquinol-cytochrome c oxidoreductase (cytochrome b-c1 complex, complex III, CIII), a multisubunit enzyme composed of 10 subunits. The complex is composed of 3 respiratory subunits cytochrome b (COB), cytochrome c1 (CYT1) and Rieske protein (RIP1), 2 core protein subunits COR1 and QCR2, and 5 low-molecular weight protein subunits QCR6, QCR7, QCR8, QCR9 and QCR10. The complex exists as an obligatory dimer and forms supercomplexes (SCs) in the inner mitochondrial membrane with a monomer or a dimer of cytochrome c oxidase (complex IV, CIV), resulting in 2 different assemblies (supercomplexes III(2)IV and III(2)IV(2)). Requires heme c as cofactor.

The protein resides in the mitochondrion inner membrane. The enzyme catalyses a quinol + 2 Fe(III)-[cytochrome c](out) = a quinone + 2 Fe(II)-[cytochrome c](out) + 2 H(+)(out). Its function is as follows. Component of the ubiquinol-cytochrome c oxidoreductase, a multisubunit transmembrane complex that is part of the mitochondrial electron transport chain which drives oxidative phosphorylation. The complex plays an important role in the uptake of multiple carbon sources present in different host niches. In Candida albicans (strain SC5314 / ATCC MYA-2876) (Yeast), this protein is Cytochrome b-c1 complex catalytic subunit, mitochondrial.